A 612-amino-acid chain; its full sequence is Chaperone protein DnaK (612 aa).

Thr-174 is modified (phosphothreonine; by autocatalysis). The segment at 578-612 (GAQAGAQGQGAAGGQKQDGNVYDADYKVVDDDKKE) is disordered. Basic and acidic residues predominate over residues 601 to 612 (ADYKVVDDDKKE).

The protein belongs to the heat shock protein 70 family.

Its function is as follows. Acts as a chaperone. The chain is Chaperone protein DnaK from Moorella thermoacetica (strain ATCC 39073 / JCM 9320).